Consider the following 189-residue polypeptide: GTPase NRas (189 aa).

GTP-binding positions include 10-18 (GAGGVGKSA) and 29-30 (VD). The Effector region signature appears at 32–40 (YDPTIEDSY). 57-61 (DTAGQ) lines the GTP pocket. Phosphoserine is present on serine 89. 116 to 119 (NKCD) provides a ligand contact to GTP. The segment at 166–185 (YRMKKLNSNDDGTQGCMGLP) is hypervariable region. Residue lysine 170 forms a Glycyl lysine isopeptide (Lys-Gly) (interchain with G-Cter in ubiquitin) linkage. A lipid anchor (S-palmitoyl cysteine) is attached at cysteine 181. Cysteine 186 carries the S-farnesyl cysteine lipid modification. The propeptide at 187 to 189 (VVM) is removed in mature form.

This sequence belongs to the small GTPase superfamily. Ras family. As to quaternary structure, interacts (active GTP-bound form preferentially) with RGS14. Interacts (active GTP-bound form) with RASSF7. Interacts (active GTP-bound form) with both SHOC2 and PP1c (all isoforms) to form a tertiary complex; SHOC2 and PP1c preferably bind M-Ras/MRAS, but they also bind K-Ras/KRAS, N-Ras/NRAS and H-Ras/HRAS. Post-translationally, palmitoylated by the ZDHHC9-GOLGA7 complex. Depalmitoylated by ABHD17A, ABHD17B and ABHD17C. A continuous cycle of de- and re-palmitoylation regulates rapid exchange between plasma membrane and Golgi. Acetylation at Lys-104 prevents interaction with guanine nucleotide exchange factors (GEFs). In terms of processing, ubiquitinated by the BCR(LZTR1) E3 ubiquitin ligase complex at Lys-170 in a non-degradative manner, leading to inhibit Ras signaling by decreasing Ras association with membranes. Post-translationally, phosphorylation at Ser-89 enhances NRAS association with its downstream effectors.

It localises to the cell membrane. The protein resides in the golgi apparatus membrane. The catalysed reaction is GTP + H2O = GDP + phosphate + H(+). With respect to regulation, alternates between an inactive form bound to GDP and an active form bound to GTP. Activated by a guanine nucleotide-exchange factor (GEF) and inactivated by a GTPase-activating protein (GAP). Ras proteins bind GDP/GTP and possess intrinsic GTPase activity. This chain is GTPase NRas (NRAS), found in Cavia porcellus (Guinea pig).